The sequence spans 311 residues: Methionyl-tRNA formyltransferase (311 aa).

A (6S)-5,6,7,8-tetrahydrofolate-binding site is contributed by 112-115; the sequence is SLLP.

The protein belongs to the Fmt family.

The catalysed reaction is L-methionyl-tRNA(fMet) + (6R)-10-formyltetrahydrofolate = N-formyl-L-methionyl-tRNA(fMet) + (6S)-5,6,7,8-tetrahydrofolate + H(+). In terms of biological role, attaches a formyl group to the free amino group of methionyl-tRNA(fMet). The formyl group appears to play a dual role in the initiator identity of N-formylmethionyl-tRNA by promoting its recognition by IF2 and preventing the misappropriation of this tRNA by the elongation apparatus. The sequence is that of Methionyl-tRNA formyltransferase from Agrobacterium fabrum (strain C58 / ATCC 33970) (Agrobacterium tumefaciens (strain C58)).